The sequence spans 180 residues: Probable macrolide acetyltransferase (180 aa).

This sequence belongs to the transferase hexapeptide repeat family.

The sequence is that of Probable macrolide acetyltransferase from Lysinibacillus sphaericus (Bacillus sphaericus).